We begin with the raw amino-acid sequence, 416 residues long: Creatine kinase U-type, mitochondrial (416 aa).

The N-terminal 39 residues, 1 to 39, are a transit peptide targeting the mitochondrion; that stretch reads MAGPFSRLLSARPGLRLLALAGAGSLAAGFLLRSEPVRA. The interval 40–64 is cardiolipin-binding; that stretch reads ASERRRLYPPSAEYPDLRKHNNCMA. One can recognise a Phosphagen kinase N-terminal domain in the interval 45 to 131; that stretch reads RLYPPSAEYP…FDPVIQERHN (87 aa). A Phosphoserine modification is found at serine 151. The Phosphagen kinase C-terminal domain maps to 158–400; sequence YVLSSRVRTG…NFLIDCERRL (243 aa). 161–165 lines the ATP pocket; sequence SSRVR. Serine 196 carries the phosphoserine modification. The residue at position 213 (threonine 213) is a Phosphothreonine. Residue histidine 224 participates in ATP binding. Serine 232 bears the Phosphoserine mark. Residues arginine 269, arginine 325, and 353 to 358 contribute to the ATP site; that span reads RGTGGV. Threonine 355 is modified (phosphothreonine). Residue serine 365 is modified to Phosphoserine. Aspartate 368 contacts ATP.

The protein belongs to the ATP:guanido phosphotransferase family. Exists as an octamer composed of four MTCK homodimers.

It localises to the mitochondrion inner membrane. The enzyme catalyses creatine + ATP = N-phosphocreatine + ADP + H(+). Reversibly catalyzes the transfer of phosphate between ATP and various phosphogens (e.g. creatine phosphate). Creatine kinase isoenzymes play a central role in energy transduction in tissues with large, fluctuating energy demands, such as skeletal muscle, heart, brain and spermatozoa. The polypeptide is Creatine kinase U-type, mitochondrial (CKMT1) (Bos taurus (Bovine)).